The primary structure comprises 437 residues: Asparagine--tRNA ligase (437 aa).

This sequence belongs to the class-II aminoacyl-tRNA synthetase family. Homodimer.

The protein localises to the cytoplasm. The enzyme catalyses tRNA(Asn) + L-asparagine + ATP = L-asparaginyl-tRNA(Asn) + AMP + diphosphate + H(+). The chain is Asparagine--tRNA ligase from Symbiobacterium thermophilum (strain DSM 24528 / JCM 14929 / IAM 14863 / T).